A 65-amino-acid chain; its full sequence is Large ribosomal subunit protein bL35 (65 aa).

Residues 1–26 form a disordered region; it reads MPKIKTVRGAAKRFKKTASGGFKRKQ. Over residues 10–26 the composition is skewed to basic residues; it reads AAKRFKKTASGGFKRKQ.

The protein belongs to the bacterial ribosomal protein bL35 family.

This chain is Large ribosomal subunit protein bL35, found in Actinobacillus pleuropneumoniae serotype 7 (strain AP76).